A 265-amino-acid chain; its full sequence is 5'-nucleotidase SurE (265 aa).

The a divalent metal cation site is built by Asp-8, Asp-9, Ser-40, and Asn-98.

Belongs to the SurE nucleotidase family. The cofactor is a divalent metal cation.

The protein localises to the cytoplasm. It catalyses the reaction a ribonucleoside 5'-phosphate + H2O = a ribonucleoside + phosphate. Functionally, nucleotidase that shows phosphatase activity on nucleoside 5'-monophosphates. This chain is 5'-nucleotidase SurE, found in Trichormus variabilis (strain ATCC 29413 / PCC 7937) (Anabaena variabilis).